The sequence spans 23 residues: MWKKPAFIDLRLGLEVTLYISNR.

The segment at residues 15-19 is a cross-link (pyrroloquinoline quinone (Glu-Tyr)); that stretch reads EVTLY.

This sequence belongs to the PqqA family.

It participates in cofactor biosynthesis; pyrroloquinoline quinone biosynthesis. Functionally, required for coenzyme pyrroloquinoline quinone (PQQ) biosynthesis. PQQ is probably formed by cross-linking a specific glutamate to a specific tyrosine residue and excising these residues from the peptide. This is Coenzyme PQQ synthesis protein A from Klebsiella pneumoniae (strain 342).